Reading from the N-terminus, the 236-residue chain is 2,3,4,5-tetrahydropyridine-2,6-dicarboxylate N-acetyltransferase (236 aa).

This sequence belongs to the transferase hexapeptide repeat family. DapH subfamily.

The enzyme catalyses (S)-2,3,4,5-tetrahydrodipicolinate + acetyl-CoA + H2O = L-2-acetamido-6-oxoheptanedioate + CoA. The protein operates within amino-acid biosynthesis; L-lysine biosynthesis via DAP pathway; LL-2,6-diaminopimelate from (S)-tetrahydrodipicolinate (acetylase route): step 1/3. Functionally, catalyzes the transfer of an acetyl group from acetyl-CoA to tetrahydrodipicolinate. This chain is 2,3,4,5-tetrahydropyridine-2,6-dicarboxylate N-acetyltransferase, found in Clostridium botulinum (strain Loch Maree / Type A3).